The chain runs to 175 residues: Inorganic pyrophosphatase (175 aa).

Substrate contacts are provided by lysine 30, arginine 44, and tyrosine 56. 3 residues coordinate Mg(2+): aspartate 66, aspartate 71, and aspartate 103. Residue tyrosine 142 participates in substrate binding.

The protein belongs to the PPase family. In terms of assembly, homohexamer. Mg(2+) is required as a cofactor.

The protein localises to the cytoplasm. It catalyses the reaction diphosphate + H2O = 2 phosphate + H(+). In terms of biological role, catalyzes the hydrolysis of inorganic pyrophosphate (PPi) forming two phosphate ions. The chain is Inorganic pyrophosphatase from Pseudomonas aeruginosa (strain ATCC 15692 / DSM 22644 / CIP 104116 / JCM 14847 / LMG 12228 / 1C / PRS 101 / PAO1).